The primary structure comprises 472 residues: Glutamate--tRNA ligase (472 aa).

Residues 18–28 (PSPTGYLHIGG) carry the 'HIGH' region motif. Over residues 122 to 138 (RARGEKPRYDGRWRPEP) the composition is skewed to basic and acidic residues. The segment at 122–150 (RARGEKPRYDGRWRPEPGKTLPVPPSGVQ) is disordered. The 'KMSKS' region signature appears at 250 to 254 (KLSKR). An ATP-binding site is contributed by Lys253.

This sequence belongs to the class-I aminoacyl-tRNA synthetase family. Glutamate--tRNA ligase type 1 subfamily. Monomer.

It localises to the cytoplasm. The catalysed reaction is tRNA(Glu) + L-glutamate + ATP = L-glutamyl-tRNA(Glu) + AMP + diphosphate. Functionally, catalyzes the attachment of glutamate to tRNA(Glu) in a two-step reaction: glutamate is first activated by ATP to form Glu-AMP and then transferred to the acceptor end of tRNA(Glu). The polypeptide is Glutamate--tRNA ligase (Thiobacillus denitrificans (strain ATCC 25259 / T1)).